Here is a 205-residue protein sequence, read N- to C-terminus: Holliday junction branch migration complex subunit RuvA (205 aa).

Residues 1-62 (MFEYVTGYVE…EDIMALYGFK (62 aa)) form a domain I region. Residues 63-141 (TREERLLFTK…DVVPDAFVDL (79 aa)) are domain II. The interval 142–152 (FSDTERFDEKK) is flexible linker. Residues 153 to 205 (GTSAELDEALEALRALGYAEREVSRVVPELLKESLTTDQYIKKALSLLLNGKR) are domain III.

It belongs to the RuvA family. Homotetramer. Forms an RuvA(8)-RuvB(12)-Holliday junction (HJ) complex. HJ DNA is sandwiched between 2 RuvA tetramers; dsDNA enters through RuvA and exits via RuvB. An RuvB hexamer assembles on each DNA strand where it exits the tetramer. Each RuvB hexamer is contacted by two RuvA subunits (via domain III) on 2 adjacent RuvB subunits; this complex drives branch migration. In the full resolvosome a probable DNA-RuvA(4)-RuvB(12)-RuvC(2) complex forms which resolves the HJ.

The protein resides in the cytoplasm. In terms of biological role, the RuvA-RuvB-RuvC complex processes Holliday junction (HJ) DNA during genetic recombination and DNA repair, while the RuvA-RuvB complex plays an important role in the rescue of blocked DNA replication forks via replication fork reversal (RFR). RuvA specifically binds to HJ cruciform DNA, conferring on it an open structure. The RuvB hexamer acts as an ATP-dependent pump, pulling dsDNA into and through the RuvAB complex. HJ branch migration allows RuvC to scan DNA until it finds its consensus sequence, where it cleaves and resolves the cruciform DNA. The protein is Holliday junction branch migration complex subunit RuvA of Bacillus cereus (strain G9842).